The chain runs to 468 residues: 6-phospho-beta-galactosidase (468 aa).

D-galactose 6-phosphate-binding residues include Gln-19, His-116, Asn-159, Glu-160, and Asn-297. The active-site Proton donor is Glu-160. The active-site Nucleophile is the Glu-375. Ser-428, Trp-429, Lys-435, and Tyr-437 together coordinate D-galactose 6-phosphate.

This sequence belongs to the glycosyl hydrolase 1 family.

The catalysed reaction is a 6-phospho-beta-D-galactoside + H2O = D-galactose 6-phosphate + an alcohol. Its pathway is carbohydrate metabolism; lactose degradation; D-galactose 6-phosphate and beta-D-glucose from lactose 6-phosphate: step 1/1. This is 6-phospho-beta-galactosidase from Streptococcus pyogenes serotype M2 (strain MGAS10270).